The sequence spans 127 residues: UPF0325 protein VV1_1856 (127 aa).

The protein belongs to the UPF0325 family.

This chain is UPF0325 protein VV1_1856, found in Vibrio vulnificus (strain CMCP6).